The primary structure comprises 408 residues: Succinylornithine transaminase (408 aa).

The residue at position 252 (Lys252) is an N6-(pyridoxal phosphate)lysine.

This sequence belongs to the class-III pyridoxal-phosphate-dependent aminotransferase family. AstC subfamily. It depends on pyridoxal 5'-phosphate as a cofactor.

The catalysed reaction is N(2)-succinyl-L-ornithine + 2-oxoglutarate = N-succinyl-L-glutamate 5-semialdehyde + L-glutamate. It participates in amino-acid degradation; L-arginine degradation via AST pathway; L-glutamate and succinate from L-arginine: step 3/5. In terms of biological role, catalyzes the transamination of N(2)-succinylornithine and alpha-ketoglutarate into N(2)-succinylglutamate semialdehyde and glutamate. Can also act as an acetylornithine aminotransferase. This Salmonella dublin (strain CT_02021853) protein is Succinylornithine transaminase.